Reading from the N-terminus, the 707-residue chain is Keratin, type II cytoskeletal 2 epidermal (707 aa).

The tract at residues 1–20 (MSCQISCRSRRGGGGGGGGG) is disordered. Residues 1–198 (MSCQISCRSR…DPEIQNVKSQ (198 aa)) form a head region. Position 22 is an asymmetric dimethylarginine (Arg22). 2 positions are modified to phosphoserine: Ser25 and Ser28. Low complexity predominate over residues 29-38 (AVVSGGSRRS). A disordered region spans residues 29-59 (AVVSGGSRRSNTSFSCISRHGGGRGGSGGGG). Arg52 bears the Omega-N-methylarginine mark. At Ser64 the chain carries Phosphoserine. Positions 199–234 (EREQIKTLNNKFASFIDKVRFLEQQNQVLRTKWELL) are coil 1A. The IF rod domain maps to 199-512 (EREQIKTLNN…KLLEGEECRM (314 aa)). Residues 235–253 (QQLDVGSRTTNLDPIFQAY) form a linker 1 region. A coil 1B region spans residues 254 to 345 (IGMLKKQVDR…TLYDAELSQL (92 aa)). Residues 346–369 (QQDVTDTNVILSMDNNRNLDLDSI) are linker 12. The interval 370-508 (IAEVQNQYEM…ATYRKLLEGE (139 aa)) is coil 2. Residues 509–707 (ECRMSGDFSD…CGSGVTFSFR (199 aa)) are tail. The interval 531–707 (SSVASKTGFG…CGSGVTFSFR (177 aa)) is disordered. Gly residues predominate over residues 539–700 (FGSGGQSSGG…GSGSGEGCGS (162 aa)). Omega-N-methylarginine occurs at positions 555, 593, 607, and 675.

It belongs to the intermediate filament family. Heterotetramer of two type I and two type II keratins. Associates with KRT10. Expressed predominantly in the suprabasal layers of the plantar epidermis outside of the footpads (at protein level). Expressed in the suprabasal layers of the interfollicular epidermis of the ear, in the interscale regions distant from the hair follicles in the tail, and in the soles of the footpads (at protein level). Expressed mainly in the middle spinous and granular cells of the epidermis of adult tail, nipple and footsole skin. Also found in ear.

The protein resides in the cytoplasm. Its function is as follows. Probably contributes to terminal cornification. Associated with keratinocyte activation, proliferation and keratinization. Required for maintenance of corneocytes and keratin filaments in suprabasal keratinocytes in the epidermis of the ear, potentially via moderation of expression and localization of keratins and their partner proteins. Plays a role in the establishment of the epidermal barrier on plantar skin. This Mus musculus (Mouse) protein is Keratin, type II cytoskeletal 2 epidermal.